The following is a 124-amino-acid chain: Small ribosomal subunit protein uS12c (124 aa).

A disordered region spans residues 1–28; the sequence is MPTFQQLVRSARKPHAKKTKSPALQGCP. Residues 10-20 are compositionally biased toward basic residues; sequence SARKPHAKKTK.

The protein belongs to the universal ribosomal protein uS12 family. Part of the 30S ribosomal subunit.

The protein resides in the plastid. With S4 and S5 plays an important role in translational accuracy. Located at the interface of the 30S and 50S subunits. The chain is Small ribosomal subunit protein uS12c (rps12) from Prototheca wickerhamii.